Consider the following 148-residue polypeptide: Deoxyuridine 5'-triphosphate nucleotidohydrolase (148 aa).

The dUMP site is built by Ser-69, Gly-82, Asp-85, Tyr-88, Arg-137, Phe-142, and Gly-143.

The protein belongs to the dUTPase family. Homotrimer. Mg(2+) is required as a cofactor.

The catalysed reaction is dUTP + H2O = dUMP + diphosphate + H(+). It participates in pyrimidine metabolism; dUMP biosynthesis; dUMP from dCTP (dUTP route): step 2/2. Involved in nucleotide metabolism via production of dUMP, the immediate precursor of thymidine nucleotides, and decreases the intracellular concentration of dUTP so that uracil cannot be incorporated into DNA. This chain is Deoxyuridine 5'-triphosphate nucleotidohydrolase (DUT1), found in Kluyveromyces lactis (strain ATCC 8585 / CBS 2359 / DSM 70799 / NBRC 1267 / NRRL Y-1140 / WM37) (Yeast).